We begin with the raw amino-acid sequence, 377 residues long: MSGNSLGKLFCVTSFGESHGPAIGCVVDGCPPGMPISTQEIQVELDRRKPGTSRHVTQRREPDEVEILSGVFEGVTTGTPIALLIRNQDQRSRDYGNIAETFRPGHADYAYWQKYGIRDHRGGGRSSARETAVRVAAGAIARKWLNQQYGVVIRGFMSQLGPIEIPFVDWDEVGRNPFFAPNASIVPALEDYMDELRKSGDSVGARIDVVASGVPVGWGEPVYDRLDADIAYAMMGINAVKGVEIGAGFSSVAQRGTEHSDEMTPEGFLSNNAGGVLGGISTGQDILVSMAVKPTSSIRLDRRSIDKQGDAVVINTHGRHDPCVGIRATPIAEAMLAIVLMDHALRHRAQCGDVSCATPKLARLAPSGVQRVPAPPR.

R48 and R54 together coordinate NADP(+). FMN is bound by residues 125–127 (RSS), 238–239 (NA), G278, 293–297 (KPTSS), and R319.

This sequence belongs to the chorismate synthase family. Homotetramer. FMNH2 serves as cofactor.

It catalyses the reaction 5-O-(1-carboxyvinyl)-3-phosphoshikimate = chorismate + phosphate. Its pathway is metabolic intermediate biosynthesis; chorismate biosynthesis; chorismate from D-erythrose 4-phosphate and phosphoenolpyruvate: step 7/7. Catalyzes the anti-1,4-elimination of the C-3 phosphate and the C-6 proR hydrogen from 5-enolpyruvylshikimate-3-phosphate (EPSP) to yield chorismate, which is the branch point compound that serves as the starting substrate for the three terminal pathways of aromatic amino acid biosynthesis. This reaction introduces a second double bond into the aromatic ring system. This chain is Chorismate synthase, found in Aromatoleum aromaticum (strain DSM 19018 / LMG 30748 / EbN1) (Azoarcus sp. (strain EbN1)).